The sequence spans 784 residues: Toll-like receptor 2 (784 aa).

A signal peptide spans 1–18; sequence MPHTLWMVWVLGVIISLS. Residues 19-587 lie on the Extracellular side of the membrane; that stretch reads KEESSNQASL…VRLSVSECHR (569 aa). Cys-30 and Cys-36 form a disulfide bridge. LRR repeat units lie at residues 54 to 77, 78 to 101, 102 to 125, 126 to 150, 151 to 175, 176 to 199, 200 to 223, 224 to 250, 251 to 278, 279 to 308, 309 to 337, 338 to 361, 362 to 388, 389 to 414, 415 to 437, 438 to 457, 458 to 478, 479 to 500, and 501 to 524; these read VKSL…RYVN, LQAL…SLGR, LEHL…PLSS, LKFL…HLTK, LRIL…GLTF, LEEL…SIQN, VSHL…LTSS, VECL…TNSL, IKKF…QISG, LLEL…DPGK, VETV…LTER, VKRI…HLKS, LEYL…AWPS, LQTL…TLKN, LTNL…WPEK, MKYL…CIPK, TLEI…NLPQ, LKEL…LLPM, and LLVL…SFHT. Residue Asn-114 is glycosylated (N-linked (GlcNAc...) asparagine). A glycan (N-linked (GlcNAc...) asparagine) is linked at Asn-199. The cysteines at positions 353 and 382 are disulfide-linked. Asn-414 is a glycosylation site (N-linked (GlcNAc...) asparagine). A disulfide bridge connects residues Cys-432 and Cys-454. N-linked (GlcNAc...) asparagine glycosylation is present at Asn-442. Residues 525-579 form the LRRCT domain; sequence LKTLEAGGNNFICSCEFLSFTQEQQALAKVLVDWPANYLCDSPSHVRGQRVQDVR. Residues 588–608 form a helical membrane-spanning segment; the sequence is AALVSGMCCALFLLILLMGVL. Residues 609-784 lie on the Cytoplasmic side of the membrane; the sequence is CHRFHGLWYM…WVNLRAAIKS (176 aa). The region spanning 639–782 is the TIR domain; the sequence is ICYDAFVSYS…GFWVNLRAAI (144 aa). Lys-754 participates in a covalent cross-link: Glycyl lysine isopeptide (Lys-Gly) (interchain with G-Cter in ubiquitin). Positions 761–778 match the ATG16L1-binding motif motif; that stretch reads YLEWPMDEARQEGFWVNL.

It belongs to the Toll-like receptor family. In terms of assembly, interacts with LY96, TLR1 and TLR6 (via extracellular domain). TLR2 seems to exist in heterodimers with either TLR1 or TLR6 before stimulation by the ligand. The heterodimers form bigger oligomers in response to their corresponding ligands as well as further heterotypic associations with other receptors such as CD14 and/or CD36. Binds MYD88 (via TIR domain). Interacts with TICAM1. Interacts with CNPY3. Interacts with ATG16L1. Interacts with PPP1R11. Interacts with TICAM2. Interacts with TIRAP. Post-translationally, ubiquitinated at Lys-754 by PPP1R11, leading to its degradation. Deubiquitinated by USP2. Glycosylation of Asn-442 is critical for secretion of the N-terminal ectodomain of TLR2.

The protein localises to the membrane. It is found in the cytoplasmic vesicle. Its subcellular location is the phagosome membrane. The protein resides in the membrane raft. Functionally, cooperates with LY96 to mediate the innate immune response to bacterial lipoproteins and other microbial cell wall components. Cooperates with TLR1 or TLR6 to mediate the innate immune response to bacterial lipoproteins or lipopeptides. Acts via MYD88 and TRAF6, leading to NF-kappa-B activation, cytokine secretion and the inflammatory response. May also promote apoptosis in response to lipoproteins. Forms activation clusters composed of several receptors depending on the ligand, these clusters trigger signaling from the cell surface and subsequently are targeted to the Golgi in a lipid-raft dependent pathway. Forms the cluster TLR2:TLR6:CD14:CD36 in response to diacylated lipopeptides and TLR2:TLR1:CD14 in response to triacylated lipopeptides. This chain is Toll-like receptor 2 (TLR2), found in Macaca fascicularis (Crab-eating macaque).